Reading from the N-terminus, the 397-residue chain is DnaJ protein homolog 1 (397 aa).

Positions K1–Y52 constitute a J domain. Residues G114–K198 form a CR-type zinc finger. CXXCXGXG motif repeat units lie at residues C127–G134, C143–G150, C170–G177, and C186–K193. Residues M367–Q397 form a disordered region. C394 carries the post-translational modification Cysteine methyl ester. C394 carries S-farnesyl cysteine lipidation. Residues A395–Q397 constitute a propeptide, removed in mature form.

It is found in the membrane. Plays a continuous role in plant development probably in the structural organization of compartments. The protein is DnaJ protein homolog 1 (DNAJ1) of Allium porrum (Leek).